Reading from the N-terminus, the 1089-residue chain is Translocase of chloroplast 120, chloroplastic (1089 aa).

At glycine 2 the chain carries N-acetylglycine. Disordered stretches follow at residues 158-179 (ATED…GVVS), 255-339 (TLSP…GLGR), and 353-381 (QPRV…EHDE). A compositionally biased stretch (polar residues) spans 165–176 (ENGNTHSSSENG). 3 positions are modified to phosphoserine: serine 179, serine 263, and serine 283. The segment covering 300-312 (EIKESQHMERESE) has biased composition (basic and acidic residues). A compositionally biased stretch (low complexity) spans 327 to 339 (AALPPARPAGLGR). The span at 353 to 374 (QPRVNGNVSHNQPQQAEDSTTA) shows a compositional bias: polar residues. Residues 454–683 (DFSCTIMVLG…KLQDNIPGGQ (230 aa)) form the AIG1-type G domain. Positions 463 to 470 (GKSGVGKS) are G1. Residues 466–471 (GVGKSA) and 485–490 (DAFQVG) each bind GTP. Serine 470 is a binding site for Mg(2+). The tract at residues 485–488 (DAFQ) is homodimerization. Positions 489–493 (VGTKK) are G2. A G3 region spans residues 510 to 513 (DTPG). Residues 548–553 (RLDMQS) are homodimerization. Residues 582–585 (THAA) form a G4 region. Residues histidine 583 and 631–632 (EN) contribute to the GTP site. The segment at 631–633 (ENH) is G5. The segment at 710–748 (PEQQYDDEDDEDDLDESSDSEEESEYDELPPFKRLTKAE) is disordered. Residues 713-737 (QYDDEDDEDDLDESSDSEEESEYDE) show a composition bias toward acidic residues. Positions 767-788 (REKLFMKRQMKEERKRRKLLKK) form a coiled coil. Residues 1064 to 1080 (LAVVALVPLFKKLLTYY) form a helical membrane-spanning segment.

It belongs to the TRAFAC class TrmE-Era-EngA-EngB-Septin-like GTPase superfamily. AIG1/Toc34/Toc159-like paraseptin GTPase family. TOC159 subfamily. Homodimer. Part of the TOC core complex that includes 1 protein for the specific recognition of transit peptides surrounded by a ring composed of four proteins forming translocation channels, and four to five GTP-binding proteins providing energy. This core complex can interact with components of the TIC complex to form a larger import complex. Chloroplastic protein precursor such as prSS (precursor of the RuBisCO small subunit) interacts with these complexes. The TOC complex contains a specific subset of polar lipids such as digalactosyldiacylglyceride (DGDG), phosphatidylcholine (PC) and phosphatidylglycerol (PG). The cofactor is Mg(2+). In terms of processing, phosphorylated by KOC1. As to expression, expressed in seedlings, flowers, and roots.

It is found in the plastid. Its subcellular location is the chloroplast outer membrane. The protein resides in the cytoplasm. In terms of biological role, GTPase involved in protein precursor import into chloroplasts. Seems to recognize chloroplast-destined precursor proteins and regulate their presentation to the translocation channel through GTP hydrolysis. Probably specialized in the import of nuclear encoded non-photosynthetic preproteins from the cytoplasm to the chloroplast. In Arabidopsis thaliana (Mouse-ear cress), this protein is Translocase of chloroplast 120, chloroplastic.